Reading from the N-terminus, the 258-residue chain is Thiazole synthase 2 (258 aa).

The Schiff-base intermediate with DXP role is filled by Lys97. Residues Gly158, 184–185 (AG), and 206–207 (NT) each bind 1-deoxy-D-xylulose 5-phosphate.

The protein belongs to the ThiG family. As to quaternary structure, homotetramer. Forms heterodimers with either ThiH or ThiS.

It localises to the cytoplasm. It carries out the reaction [ThiS sulfur-carrier protein]-C-terminal-Gly-aminoethanethioate + 2-iminoacetate + 1-deoxy-D-xylulose 5-phosphate = [ThiS sulfur-carrier protein]-C-terminal Gly-Gly + 2-[(2R,5Z)-2-carboxy-4-methylthiazol-5(2H)-ylidene]ethyl phosphate + 2 H2O + H(+). The protein operates within cofactor biosynthesis; thiamine diphosphate biosynthesis. Catalyzes the rearrangement of 1-deoxy-D-xylulose 5-phosphate (DXP) to produce the thiazole phosphate moiety of thiamine. Sulfur is provided by the thiocarboxylate moiety of the carrier protein ThiS. In vitro, sulfur can be provided by H(2)S. The polypeptide is Thiazole synthase 2 (Syntrophotalea carbinolica (strain DSM 2380 / NBRC 103641 / GraBd1) (Pelobacter carbinolicus)).